A 207-amino-acid polypeptide reads, in one-letter code: 3-isopropylmalate dehydratase small subunit (207 aa).

This sequence belongs to the LeuD family. LeuD type 1 subfamily. Heterodimer of LeuC and LeuD.

It carries out the reaction (2R,3S)-3-isopropylmalate = (2S)-2-isopropylmalate. It participates in amino-acid biosynthesis; L-leucine biosynthesis; L-leucine from 3-methyl-2-oxobutanoate: step 2/4. In terms of biological role, catalyzes the isomerization between 2-isopropylmalate and 3-isopropylmalate, via the formation of 2-isopropylmaleate. This Gluconacetobacter diazotrophicus (strain ATCC 49037 / DSM 5601 / CCUG 37298 / CIP 103539 / LMG 7603 / PAl5) protein is 3-isopropylmalate dehydratase small subunit.